The sequence spans 190 residues: GTP cyclohydrolase 1 (190 aa).

Residues Cys75, His78, and Cys146 each coordinate Zn(2+).

It belongs to the GTP cyclohydrolase I family. As to quaternary structure, toroid-shaped homodecamer, composed of two pentamers of five dimers.

It carries out the reaction GTP + H2O = 7,8-dihydroneopterin 3'-triphosphate + formate + H(+). It participates in cofactor biosynthesis; 7,8-dihydroneopterin triphosphate biosynthesis; 7,8-dihydroneopterin triphosphate from GTP: step 1/1. This chain is GTP cyclohydrolase 1, found in Campylobacter curvus (strain 525.92).